Reading from the N-terminus, the 464-residue chain is Protein FAM90A24 (464 aa).

3 disordered regions span residues 1-42 (MMAR…DPRL), 69-389 (VPAT…HDGA), and 415-437 (HSPE…SEAP). Composition is skewed to basic and acidic residues over residues 74 to 89 (GKKE…KPRG) and 97 to 114 (NKDK…DPQR). Low complexity predominate over residues 180-197 (LASLSPLRKASLSSSSSL).

The protein belongs to the FAM90 family.

The chain is Protein FAM90A24 from Homo sapiens (Human).